A 100-amino-acid chain; its full sequence is Protein Tat (100 aa).

The interaction with human CREBBP stretch occupies residues 1–24 (MDPIDPDLEPWKHPGSQPRTVCNN). The segment at 1–48 (MDPIDPDLEPWKHPGSQPRTVCNNCYCKACCYHCIYCFTKKGLGISYG) is transactivation. The Zn(2+) site is built by C22, C25, and C27. The interval 22–37 (CNNCYCKACCYHCIYC) is cysteine-rich. K28 is modified (N6-acetyllysine; by host PCAF). Zn(2+)-binding residues include C30, H33, C34, and C37. The core stretch occupies residues 38–48 (FTKKGLGISYG). Over residues 48–58 (GRKKRTTRRRT) the composition is skewed to basic residues. Residues 48-100 (GRKKRTTRRRTAPAGSKNNQDSIPKQPLSQSRGNKEGSEKSTKEVASKTEADQ) form a disordered region. The Nuclear localization signal, RNA-binding (TAR), and protein transduction motif lies at 49–57 (RKKRTTRRR). Positions 49 to 87 (RKKRTTRRRTAPAGSKNNQDSIPKQPLSQSRGNKEGSEK) are interaction with the host capping enzyme RNGTT. K50 and K51 each carry N6-acetyllysine; by host EP300 and GCN5L2. R52 is subject to Asymmetric dimethylarginine; by host PRMT6. The span at 63-79 (SKNNQDSIPKQPLSQSR) shows a compositional bias: polar residues. A Glycyl lysine isopeptide (Lys-Gly) (interchain with G-Cter in ubiquitin) cross-link involves residue K72. The span at 80 to 100 (GNKEGSEKSTKEVASKTEADQ) shows a compositional bias: basic and acidic residues.

The protein belongs to the lentiviruses Tat family. Interacts with host CCNT1. Associates with the P-TEFb complex composed at least of Tat, P-TEFb (CDK9 and CCNT1), TAR RNA, RNA Pol II. Recruits the HATs CREBBP, TAF1/TFIID, EP300, PCAF and GCN5L2. Interacts with host KAT5/Tip60; this interaction targets the latter to degradation. Interacts with the host deacetylase SIRT1. Interacts with host capping enzyme RNGTT; this interaction stimulates RNGTT. Binds to host KDR, and to the host integrins ITGAV/ITGB3 and ITGA5/ITGB1. Interacts with host KPNB1/importin beta-1 without previous binding to KPNA1/importin alpha-1. Interacts with EIF2AK2. Interacts with host nucleosome assembly protein NAP1L1; this interaction may be required for the transport of Tat within the nucleus, since the two proteins interact at the nuclear rim. Interacts with host C1QBP/SF2P32; this interaction involves lysine-acetylated Tat. Interacts with the host chemokine receptors CCR2, CCR3 and CXCR4. Interacts with host DPP4/CD26; this interaction may trigger an anti-proliferative effect. Interacts with host LDLR. Interacts with the host extracellular matrix metalloproteinase MMP1. Interacts with host PRMT6; this interaction mediates Tat's methylation. Interacts with, and is ubiquitinated by MDM2/Hdm2. Interacts with host PSMC3 and HTATIP2. Interacts with STAB1; this interaction may overcome SATB1-mediated repression of IL2 and IL2RA (interleukin) in T cells by binding to the same domain than HDAC1. Interacts (when acetylated) with human CDK13, thereby increasing HIV-1 mRNA splicing and promoting the production of the doubly spliced HIV-1 protein Nef. Interacts with host TBP; this interaction modulates the activity of transcriptional pre-initiation complex. Interacts with host RELA. In terms of processing, asymmetrical arginine methylation by host PRMT6 seems to diminish the transactivation capacity of Tat and affects the interaction with host CCNT1. Post-translationally, acetylation by EP300, CREBBP, GCN5L2/GCN5 and PCAF regulates the transactivation activity of Tat. EP300-mediated acetylation of Lys-50 promotes dissociation of Tat from the TAR RNA through the competitive binding to PCAF's bromodomain. In addition, the non-acetylated Tat's N-terminus can also interact with PCAF. PCAF-mediated acetylation of Lys-28 enhances Tat's binding to CCNT1. Lys-50 is deacetylated by SIRT1. Polyubiquitination by host MDM2 does not target Tat to degradation, but activates its transactivation function and fosters interaction with CCNT1 and TAR RNA. In terms of processing, phosphorylated by EIF2AK2 on serine and threonine residues adjacent to the basic region important for TAR RNA binding and function. Phosphorylation of Tat by EIF2AK2 is dependent on the prior activation of EIF2AK2 by dsRNA.

The protein resides in the host nucleus. The protein localises to the host nucleolus. It is found in the host cytoplasm. Its subcellular location is the secreted. In terms of biological role, transcriptional activator that increases RNA Pol II processivity, thereby increasing the level of full-length viral transcripts. Recognizes a hairpin structure at the 5'-LTR of the nascent viral mRNAs referred to as the transactivation responsive RNA element (TAR) and recruits the cyclin T1-CDK9 complex (P-TEFb complex) that will in turn hyperphosphorylate the RNA polymerase II to allow efficient elongation. The CDK9 component of P-TEFb and other Tat-activated kinases hyperphosphorylate the C-terminus of RNA Pol II that becomes stabilized and much more processive. Other factors such as HTATSF1/Tat-SF1, SUPT5H/SPT5, and HTATIP2 are also important for Tat's function. Besides its effect on RNA Pol II processivity, Tat induces chromatin remodeling of proviral genes by recruiting the histone acetyltransferases (HATs) CREBBP, EP300 and PCAF to the chromatin. This also contributes to the increase in proviral transcription rate, especially when the provirus integrates in transcriptionally silent region of the host genome. To ensure maximal activation of the LTR, Tat mediates nuclear translocation of NF-kappa-B by interacting with host RELA. Through its interaction with host TBP, Tat may also modulate transcription initiation. Tat can reactivate a latently infected cell by penetrating in it and transactivating its LTR promoter. In the cytoplasm, Tat is thought to act as a translational activator of HIV-1 mRNAs. Extracellular circulating Tat can be endocytosed by surrounding uninfected cells via the binding to several surface receptors such as CD26, CXCR4, heparan sulfate proteoglycans (HSPG) or LDLR. Neurons are rarely infected, but they internalize Tat via their LDLR. Through its interaction with nuclear HATs, Tat is potentially able to control the acetylation-dependent cellular gene expression. Modulates the expression of many cellular genes involved in cell survival, proliferation or in coding for cytokines or cytokine receptors. Tat plays a role in T-cell and neurons apoptosis. Tat induced neurotoxicity and apoptosis probably contribute to neuroAIDS. Circulating Tat also acts as a chemokine-like and/or growth factor-like molecule that binds to specific receptors on the surface of the cells, affecting many cellular pathways. In the vascular system, Tat binds to ITGAV/ITGB3 and ITGA5/ITGB1 integrins dimers at the surface of endothelial cells and competes with bFGF for heparin-binding sites, leading to an excess of soluble bFGF. The polypeptide is Protein Tat (Pan (chimpanzees)).